Reading from the N-terminus, the 388-residue chain is Succinate--CoA ligase [ADP-forming] subunit beta (388 aa).

Residues 9 to 244 (KQLFAEFGLP…PSQEDKREAH (236 aa)) form the ATP-grasp domain. ATP contacts are provided by residues K46, 53–55 (GRG), E99, S102, and E107. 2 residues coordinate Mg(2+): N199 and D213. Substrate contacts are provided by residues N264 and 321–323 (GIV).

This sequence belongs to the succinate/malate CoA ligase beta subunit family. As to quaternary structure, heterotetramer of two alpha and two beta subunits. Mg(2+) serves as cofactor.

It catalyses the reaction succinate + ATP + CoA = succinyl-CoA + ADP + phosphate. The catalysed reaction is GTP + succinate + CoA = succinyl-CoA + GDP + phosphate. Its pathway is carbohydrate metabolism; tricarboxylic acid cycle; succinate from succinyl-CoA (ligase route): step 1/1. Its function is as follows. Succinyl-CoA synthetase functions in the citric acid cycle (TCA), coupling the hydrolysis of succinyl-CoA to the synthesis of either ATP or GTP and thus represents the only step of substrate-level phosphorylation in the TCA. The beta subunit provides nucleotide specificity of the enzyme and binds the substrate succinate, while the binding sites for coenzyme A and phosphate are found in the alpha subunit. The chain is Succinate--CoA ligase [ADP-forming] subunit beta from Vibrio vulnificus (strain CMCP6).